The chain runs to 533 residues: Glucosidase 2 subunit beta (533 aa).

The signal sequence occupies residues 1–13 (MLLLLLLLPMCWA). The residue at position 23 (Ser23) is a Phosphoserine. LDL-receptor class A domains lie at 36-70 (FTCLDGSASIPFDQVNDDYCDCKDGSDEPGTAACP) and 71-112 (NGSF…IVCE). 2 disulfides stabilise this stretch: Cys38–Cys57 and Cys55–Cys69. Substrate is bound at residue Asp48. Residues Gln49, Asp52, Tyr54, Asp56, Asp62, and Glu63 each contribute to the Ca(2+) site. Asp52 lines the substrate pocket. The N-linked (GlcNAc...) asparagine glycan is linked to Asn71. 3 disulfide bridges follow: Cys76-Cys98, Cys96-Cys111, and Cys99-Cys115. A Phosphoserine; by PKC modification is found at Ser88. Residues Asp93, Val95, Asp97, Asp103, and Glu104 each coordinate Ca(2+). Lys165 carries the post-translational modification N6-succinyllysine. Ser167 is subject to Phosphoserine. EF-hand domains lie at 208–243 (RERELAASAFQELDDDMDGAVSVAELQTHPELDTDG) and 244–279 (DGALSEGEAQTLLGGDAQMDAAFFYDRVWAAIRDKY). Residues Asp221, Asp223, Asp225, and Glu232 each contribute to the Ca(2+) site. Positions 284–363 (LPTEYPPSPP…SPTEEDRMPP (80 aa)) are disordered. A compositionally biased stretch (acidic residues) spans 312 to 336 (TEEEDEDEEDEETEEDEDEEDEDSQ). 2 positions are modified to phosphoserine; by PKC: Ser388 and Ser395. Positions 418–519 (SQCYELTTNE…ELMTPAACPE (102 aa)) constitute an MRH domain. The cysteines at positions 420 and 433 are disulfide-linked. A Phosphoserine; by PKC modification is found at Ser439. 2 cysteine pairs are disulfide-bonded: Cys476-Cys505 and Cys490-Cys517. Asn481 carries an N-linked (GlcNAc...) asparagine glycan. Positions 530–533 (HDEL) match the Prevents secretion from ER motif.

In terms of assembly, heterodimer of a catalytic alpha subunit (GANAB) and a beta subunit (PRKCSH). Binds glycosylated PTPRC. In terms of tissue distribution, ubiquitous. Highly expressed in liver, spleen, lung, duodenum, stomach, adrenal gland, pituitary, testis, corpus luteum, uterus and fetal ovary.

The protein localises to the endoplasmic reticulum. It participates in glycan metabolism; N-glycan metabolism. Its function is as follows. Regulatory subunit of glucosidase II that cleaves sequentially the 2 innermost alpha-1,3-linked glucose residues from the Glc(2)Man(9)GlcNAc(2) oligosaccharide precursor of immature glycoproteins. Required for efficient PKD1/Polycystin-1 biogenesis and trafficking to the plasma membrane of the primary cilia. This chain is Glucosidase 2 subunit beta (PRKCSH), found in Bos taurus (Bovine).